Here is a 314-residue protein sequence, read N- to C-terminus: Caspase-like protein (314 aa).

Belongs to the peptidase C14A family.

In terms of biological role, may be involved in viral replication. This chain is Caspase-like protein, found in Heliothis virescens ascovirus 3e (HvAV-3e).